A 222-amino-acid polypeptide reads, in one-letter code: Glutathione S-transferase A2 (222 aa).

Ala-2 carries the post-translational modification N-acetylalanine. The GST N-terminal domain occupies 3-83 (EKPKLHYSNI…YIASKYNLYG (81 aa)). Lys-4 is subject to N6-succinyllysine. Residues Tyr-9, Arg-45, 54–55 (QV), and 67–68 (QT) each bind glutathione. The 123-residue stretch at 85-207 (DIKEKALIDM…LQPGSPRKPP (123 aa)) folds into the GST C-terminal domain. Positions 199 to 222 (QPGSPRKPPMDEKSLEESRKIFRF) are disordered. Positions 206–222 (PPMDEKSLEESRKIFRF) are enriched in basic and acidic residues.

It belongs to the GST superfamily. Alpha family. In terms of assembly, homodimer or heterodimer of GSTA1 and GSTA2. Liver.

The protein resides in the cytoplasm. The catalysed reaction is RX + glutathione = an S-substituted glutathione + a halide anion + H(+). Its function is as follows. Catalyzes the conjugation of glutathione to a large variety of electrophilic compounds. The polypeptide is Glutathione S-transferase A2 (GSTA2) (Homo sapiens (Human)).